The sequence spans 77 residues: ALNGITKSAQIGFGSFVDKTVLPFVNTHPEKLKNPCPEKNENCQPPFSFKHILNLTANGKEFQDQVGKQGISGNLDR.

A disulfide bridge links C36 with C43. A glycan (N-linked (GlcNAc...) asparagine) is linked at N54.

The protein belongs to the integrin beta chain family. In terms of assembly, dimer of an alpha and beta subunit.

The protein localises to the membrane. In terms of biological role, integrins are a large family of cell surface glycoproteins that mediate cell to cell and cell to matrix adhesion. The sequence is that of Integrin beta-2 (itgb2) from Xenopus laevis (African clawed frog).